Consider the following 181-residue polypeptide: Organ-specific protein S2 (181 aa).

A run of 4 repeats spans residues 59-84, 85-110, 111-136, and 137-162. The interval 59-162 is 4 X 26 AA tandem repeats; sequence HAKENMGAIG…NASAYGDNEI (104 aa). Residues 94–181 are disordered; that stretch reads GEFEPRPNAS…PRPSMTKYNA (88 aa).

It to organ specific protein P4. As to expression, expressed in stems.

The protein is Organ-specific protein S2 of Pisum sativum (Garden pea).